A 55-amino-acid chain; its full sequence is Preprotein translocase subunit SecG (55 aa).

Topologically, residues 1-31 (MPKNNTNENFQSGAGLIRYFNEEEIKGPALD) are cytoplasmic. The helical transmembrane segment at 32-51 (PKLIIYIGIAMAVIVELAKI) threads the bilayer. The Extracellular segment spans residues 52–55 (FWPV).

This sequence belongs to the SEC61-beta family. As to quaternary structure, component of the protein translocase complex. Heterotrimer consisting of alpha (SecY), beta (SecG) and gamma (SecE) subunits. Can form oligomers of the heterotrimer.

The protein resides in the cell membrane. In terms of biological role, involved in protein export. The function of the beta subunit is unknown, but it may be involved in stabilization of the trimeric complex. The protein is Preprotein translocase subunit SecG of Picrophilus torridus (strain ATCC 700027 / DSM 9790 / JCM 10055 / NBRC 100828 / KAW 2/3).